A 514-amino-acid chain; its full sequence is 1-pyrroline-5-carboxylate dehydrogenase (514 aa).

Catalysis depends on residues Glu-286 and Cys-320.

Belongs to the aldehyde dehydrogenase family. RocA subfamily.

It catalyses the reaction L-glutamate 5-semialdehyde + NAD(+) + H2O = L-glutamate + NADH + 2 H(+). It participates in amino-acid degradation; L-proline degradation into L-glutamate; L-glutamate from L-proline: step 2/2. This Staphylococcus aureus (strain MRSA252) protein is 1-pyrroline-5-carboxylate dehydrogenase.